We begin with the raw amino-acid sequence, 307 residues long: Thiamine-monophosphate kinase (307 aa).

Residues Asp-26, Thr-37, Thr-38, and Asp-39 each contribute to the Mg(2+) site. A substrate-binding site is contributed by His-46. Residues Asp-68 and Asp-117 each contribute to the Mg(2+) site. Residues 116–117 (GD) and Arg-140 contribute to the ATP site. Residue Asp-207 participates in Mg(2+) binding. Thr-209 lines the ATP pocket. A Mg(2+)-binding site is contributed by Asp-210. Substrate-binding residues include Glu-254 and Phe-304.

The protein belongs to the thiamine-monophosphate kinase family.

The enzyme catalyses thiamine phosphate + ATP = thiamine diphosphate + ADP. The protein operates within cofactor biosynthesis; thiamine diphosphate biosynthesis; thiamine diphosphate from thiamine phosphate: step 1/1. Functionally, catalyzes the ATP-dependent phosphorylation of thiamine-monophosphate (TMP) to form thiamine-pyrophosphate (TPP), the active form of vitamin B1. This chain is Thiamine-monophosphate kinase, found in Leptospira interrogans serogroup Icterohaemorrhagiae serovar Lai (strain 56601).